The primary structure comprises 185 residues: MSNTASLKKEYQDRIVPALTKEFGYKSVMQVPVLKKIVINQGLGMATADKKIIDIAISELSTITGQKAVATVSKKDISNFKLRKKMPIGVMVTLRREQMYEFLERLVRVALPRIRDFKGIESKLDGRGNYTLGIQEQIIFPEINIDNITKILGMNITFVTSAKTDEEGYALLREFGLPFKNGKKD.

It belongs to the universal ribosomal protein uL5 family. Part of the 50S ribosomal subunit; part of the 5S rRNA/L5/L18/L25 subcomplex. Contacts the 5S rRNA and the P site tRNA. Forms a bridge to the 30S subunit in the 70S ribosome.

Its function is as follows. This is one of the proteins that bind and probably mediate the attachment of the 5S RNA into the large ribosomal subunit, where it forms part of the central protuberance. In the 70S ribosome it contacts protein S13 of the 30S subunit (bridge B1b), connecting the 2 subunits; this bridge is implicated in subunit movement. Contacts the P site tRNA; the 5S rRNA and some of its associated proteins might help stabilize positioning of ribosome-bound tRNAs. In Parabacteroides distasonis (strain ATCC 8503 / DSM 20701 / CIP 104284 / JCM 5825 / NCTC 11152), this protein is Large ribosomal subunit protein uL5.